A 93-amino-acid polypeptide reads, in one-letter code: MSITREKKSELISEYCLKKGDTGSSFVQCAILSERIRNLTEHLKTHKKDFHCRRGLMVLVYRRRNGLQYIKKKYGDDQYLALIKRLGIRDIFH.

It belongs to the universal ribosomal protein uS15 family. In terms of assembly, part of the 30S ribosomal subunit. Forms a bridge to the 50S subunit in the 70S ribosome, contacting the 23S rRNA.

In terms of biological role, one of the primary rRNA binding proteins, it binds directly to 16S rRNA where it helps nucleate assembly of the platform of the 30S subunit by binding and bridging several RNA helices of the 16S rRNA. Its function is as follows. Forms an intersubunit bridge (bridge B4) with the 23S rRNA of the 50S subunit in the ribosome. This Ehrlichia canis (strain Jake) protein is Small ribosomal subunit protein uS15.